The primary structure comprises 304 residues: Nucleotide-binding protein RHA1_ro07174 (304 aa).

ATP is bound at residue 24 to 31 (GLSGAGLQ). 75–78 (DVRS) provides a ligand contact to GTP.

This sequence belongs to the RapZ-like family.

Functionally, displays ATPase and GTPase activities. This is Nucleotide-binding protein RHA1_ro07174 from Rhodococcus jostii (strain RHA1).